The chain runs to 325 residues: Cytochrome c1, heme protein, mitochondrial (325 aa).

The N-terminal 84 residues, 1-84 (MAAAAASLRR…AVALHSAVSA (84 aa)), are a transit peptide targeting the mitochondrion. Over 85 to 287 (SDLELHPPSY…SEPEHDHRKR (203 aa)) the chain is Mitochondrial intermembrane. One can recognise a Cytochrome c domain in the interval 108–209 (TSIRRGFQVY…IVRARHGGED (102 aa)). Heme c is bound by residues Cys-121, Cys-124, His-125, and Met-244. The chain crosses the membrane as a helical span at residues 288-308 (MGLKMLLMMGLLLPLTYAMKR). Topologically, residues 309-325 (HKWSVLKSRKLAYRPPK) are mitochondrial matrix.

Belongs to the cytochrome c family. In terms of assembly, component of the ubiquinol-cytochrome c oxidoreductase (cytochrome b-c1 complex, complex III, CIII), a multisubunit enzyme composed of 11 subunits. The complex is composed of 3 respiratory subunits cytochrome b, cytochrome c1 and Rieske protein UQCRFS1, 2 core protein subunits UQCRC1/QCR1 and UQCRC2/QCR2, and 6 low-molecular weight protein subunits UQCRH/QCR6, UQCRB/QCR7, UQCRQ/QCR8, UQCR10/QCR9, UQCR11/QCR10 and subunit 9, the cleavage product of Rieske protein UQCRFS1. The complex exists as an obligatory dimer and forms supercomplexes (SCs) in the inner mitochondrial membrane with NADH-ubiquinone oxidoreductase (complex I, CI) and cytochrome c oxidase (complex IV, CIV), resulting in different assemblies (supercomplex SCI(1)III(2)IV(1) and megacomplex MCI(2)III(2)IV(2)). Interacts with FLVCR2; this interaction occurs in the absence of heme and is disrupted upon heme binding. It depends on heme c as a cofactor.

The protein localises to the mitochondrion inner membrane. It catalyses the reaction a quinol + 2 Fe(III)-[cytochrome c](out) = a quinone + 2 Fe(II)-[cytochrome c](out) + 2 H(+)(out). Component of the ubiquinol-cytochrome c oxidoreductase, a multisubunit transmembrane complex that is part of the mitochondrial electron transport chain which drives oxidative phosphorylation. The respiratory chain contains 3 multisubunit complexes succinate dehydrogenase (complex II, CII), ubiquinol-cytochrome c oxidoreductase (cytochrome b-c1 complex, complex III, CIII) and cytochrome c oxidase (complex IV, CIV), that cooperate to transfer electrons derived from NADH and succinate to molecular oxygen, creating an electrochemical gradient over the inner membrane that drives transmembrane transport and the ATP synthase. The cytochrome b-c1 complex catalyzes electron transfer from ubiquinol to cytochrome c, linking this redox reaction to translocation of protons across the mitochondrial inner membrane, with protons being carried across the membrane as hydrogens on the quinol. In the process called Q cycle, 2 protons are consumed from the matrix, 4 protons are released into the intermembrane space and 2 electrons are passed to cytochrome c. Cytochrome c1 is a catalytic core subunit containing a c-type heme. It transfers electrons from the [2Fe-2S] iron-sulfur cluster of the Rieske protein to cytochrome c. The protein is Cytochrome c1, heme protein, mitochondrial (Cyc1) of Mus musculus (Mouse).